Reading from the N-terminus, the 199-residue chain is 3-isopropylmalate dehydratase small subunit (199 aa).

This sequence belongs to the LeuD family. LeuD type 1 subfamily. In terms of assembly, heterodimer of LeuC and LeuD.

It carries out the reaction (2R,3S)-3-isopropylmalate = (2S)-2-isopropylmalate. It functions in the pathway amino-acid biosynthesis; L-leucine biosynthesis; L-leucine from 3-methyl-2-oxobutanoate: step 2/4. Functionally, catalyzes the isomerization between 2-isopropylmalate and 3-isopropylmalate, via the formation of 2-isopropylmaleate. This is 3-isopropylmalate dehydratase small subunit from Leifsonia xyli subsp. xyli (strain CTCB07).